The chain runs to 337 residues: DNA-directed RNA polymerase subunit alpha (337 aa).

The interval 1–233 is alpha N-terminal domain (alpha-NTD); the sequence is MVREEVVGST…DLFIPFLHAE (233 aa). Positions 265 to 337 are alpha C-terminal domain (alpha-CTD); that stretch reads KEIALKCIFI…FAIDLPKNKF (73 aa).

This sequence belongs to the RNA polymerase alpha chain family. In terms of assembly, in plastids the minimal PEP RNA polymerase catalytic core is composed of four subunits: alpha, beta, beta', and beta''. When a (nuclear-encoded) sigma factor is associated with the core the holoenzyme is formed, which can initiate transcription.

The protein localises to the plastid. Its subcellular location is the chloroplast. The enzyme catalyses RNA(n) + a ribonucleoside 5'-triphosphate = RNA(n+1) + diphosphate. In terms of biological role, DNA-dependent RNA polymerase catalyzes the transcription of DNA into RNA using the four ribonucleoside triphosphates as substrates. The chain is DNA-directed RNA polymerase subunit alpha from Acorus gramineus (Dwarf sweet flag).